We begin with the raw amino-acid sequence, 778 residues long: Molybdenum cofactor sulfurase (778 aa).

Lys-235 carries the post-translational modification N6-(pyridoxal phosphate)lysine. Residue Cys-399 is part of the active site. 2 disordered regions span residues 576 to 596 (LSKN…SRVC) and 654 to 673 (ARPA…DTEK). Residues 584 to 594 (RSSSSRSRSSR) are compositionally biased toward low complexity. The region spanning 651–778 (LPTARPALPG…ETAERARSRL (128 aa)) is the MOSC domain.

It belongs to the class-V pyridoxal-phosphate-dependent aminotransferase family. MOCOS subfamily. The cofactor is pyridoxal 5'-phosphate.

The catalysed reaction is Mo-molybdopterin + L-cysteine + AH2 = thio-Mo-molybdopterin + L-alanine + A + H2O. It participates in cofactor biosynthesis; molybdopterin biosynthesis. In terms of biological role, sulfurates the molybdenum cofactor. Sulfation of molybdenum is essential for xanthine dehydrogenase (XDH) and aldehyde oxidase (ADO) enzymes in which molybdenum cofactor is liganded by 1 oxygen and 1 sulfur atom in active form. This is Molybdenum cofactor sulfurase from Chaetomium globosum (strain ATCC 6205 / CBS 148.51 / DSM 1962 / NBRC 6347 / NRRL 1970) (Soil fungus).